The following is an 83-amino-acid chain: CDC42 small effector protein 2 (83 aa).

Residues Cys-10 and Cys-11 are each lipidated (S-palmitoyl cysteine). A CRIB domain is found at 28–41; that stretch reads IGEPTNFVHTAHVG. Phosphoserine occurs at positions 42 and 51.

Belongs to the CDC42SE/SPEC family. As to quaternary structure, interacts with CDC42 (in GTP-bound form). Interacts weakly with RAC1 and not at all with RHOA.

It localises to the cytoplasm. The protein localises to the cytoskeleton. Its subcellular location is the cell membrane. The protein resides in the cell projection. It is found in the phagocytic cup. Probably involved in the organization of the actin cytoskeleton by acting downstream of CDC42, inducing actin filament assembly. Alters CDC42-induced cell shape changes. In activated T-cells, may play a role in CDC42-mediated F-actin accumulation at the immunological synapse. May play a role in early contractile events in phagocytosis in macrophages. This is CDC42 small effector protein 2 (Cdc42se2) from Rattus norvegicus (Rat).